The sequence spans 39 residues: Cytochrome b559 subunit beta (39 aa).

The helical transmembrane segment at 14–30 (WLAIHGLAVPTVFFLGS) threads the bilayer. H18 contacts heme.

Belongs to the PsbE/PsbF family. In terms of assembly, heterodimer of an alpha subunit and a beta subunit. PSII is composed of 1 copy each of membrane proteins PsbA, PsbB, PsbC, PsbD, PsbE, PsbF, PsbH, PsbI, PsbJ, PsbK, PsbL, PsbM, PsbT, PsbX, PsbY, PsbZ, Psb30/Ycf12, at least 3 peripheral proteins of the oxygen-evolving complex and a large number of cofactors. It forms dimeric complexes. Heme b is required as a cofactor.

It is found in the plastid. Its subcellular location is the chloroplast thylakoid membrane. In terms of biological role, this b-type cytochrome is tightly associated with the reaction center of photosystem II (PSII). PSII is a light-driven water:plastoquinone oxidoreductase that uses light energy to abstract electrons from H(2)O, generating O(2) and a proton gradient subsequently used for ATP formation. It consists of a core antenna complex that captures photons, and an electron transfer chain that converts photonic excitation into a charge separation. The chain is Cytochrome b559 subunit beta from Ephedra sinica (Chinese ephedra).